The following is a 154-amino-acid chain: Leghemoglobin-1 (154 aa).

The Globin domain maps to valine 3–lysine 151. A heme b-binding site is contributed by serine 46. Serine 46 is modified (phosphoserine). Histidine 64 contacts O2. Heme b is bound by residues lysine 67, histidine 98, and lysine 101. The residue at position 139 (tyrosine 139) is a Nitrated tyrosine.

The protein belongs to the plant globin family. Monomer. Nitrated in effective nodules and particularly in hypoxic conditions; this mechanism may play a protective role in the symbiosis by buffering toxic peroxynitrite NO(2)(-). Nitration level decrease during nodule senescence. In terms of processing, phosphorylation at Ser-46 disrupts the molecular environment of its porphyrin ring oxygen binding pocket, thus leading to a reduced oxygen consumption and to the delivery of oxygen O(2) to symbiosomes. Accumulates in developing root nodules and present in roots, especially in the upper part. Detected in leaves at low levels.

Its subcellular location is the cytoplasm. It localises to the cytosol. The protein localises to the nucleus. Its function is as follows. Leghemoglobin that reversibly binds oxygen O(2) through a pentacoordinated heme iron. In root nodules, facilitates the diffusion of oxygen to the bacteroids while preventing the bacterial nitrogenase from being inactivated by buffering dioxygen, nitric oxide and carbon monoxide, and promoting the formation of reactive oxygen species (ROS, e.g. H(2)O(2)). This role is essential for symbiotic nitrogen fixation (SNF). In Lupinus luteus (European yellow lupine), this protein is Leghemoglobin-1.